Here is a 343-residue protein sequence, read N- to C-terminus: Holliday junction branch migration complex subunit RuvB (343 aa).

The segment at 1–178 (MNFVQQNREG…FGMILELQFY (178 aa)) is large ATPase domain (RuvB-L). ATP is bound by residues L17, R18, G59, K62, T63, T64, 125 to 127 (EDY), R168, Y178, and R215. Mg(2+) is bound at residue T63. Residues 179 to 249 (TVKELMEIIK…LVEKTMDILE (71 aa)) are small ATPAse domain (RuvB-S). The tract at residues 252–343 (KLGLDEMDRK…DESLRKSDES (92 aa)) is head domain (RuvB-H). 2 residues coordinate DNA: R307 and R312.

This sequence belongs to the RuvB family. In terms of assembly, homohexamer. Forms an RuvA(8)-RuvB(12)-Holliday junction (HJ) complex. HJ DNA is sandwiched between 2 RuvA tetramers; dsDNA enters through RuvA and exits via RuvB. An RuvB hexamer assembles on each DNA strand where it exits the tetramer. Each RuvB hexamer is contacted by two RuvA subunits (via domain III) on 2 adjacent RuvB subunits; this complex drives branch migration. In the full resolvosome a probable DNA-RuvA(4)-RuvB(12)-RuvC(2) complex forms which resolves the HJ.

The protein resides in the cytoplasm. The catalysed reaction is ATP + H2O = ADP + phosphate + H(+). The RuvA-RuvB-RuvC complex processes Holliday junction (HJ) DNA during genetic recombination and DNA repair, while the RuvA-RuvB complex plays an important role in the rescue of blocked DNA replication forks via replication fork reversal (RFR). RuvA specifically binds to HJ cruciform DNA, conferring on it an open structure. The RuvB hexamer acts as an ATP-dependent pump, pulling dsDNA into and through the RuvAB complex. RuvB forms 2 homohexamers on either side of HJ DNA bound by 1 or 2 RuvA tetramers; 4 subunits per hexamer contact DNA at a time. Coordinated motions by a converter formed by DNA-disengaged RuvB subunits stimulates ATP hydrolysis and nucleotide exchange. Immobilization of the converter enables RuvB to convert the ATP-contained energy into a lever motion, pulling 2 nucleotides of DNA out of the RuvA tetramer per ATP hydrolyzed, thus driving DNA branch migration. The RuvB motors rotate together with the DNA substrate, which together with the progressing nucleotide cycle form the mechanistic basis for DNA recombination by continuous HJ branch migration. Branch migration allows RuvC to scan DNA until it finds its consensus sequence, where it cleaves and resolves cruciform DNA. The sequence is that of Holliday junction branch migration complex subunit RuvB from Pseudothermotoga lettingae (strain ATCC BAA-301 / DSM 14385 / NBRC 107922 / TMO) (Thermotoga lettingae).